The chain runs to 515 residues: Bifunctional purine biosynthesis protein PurH (515 aa).

Positions 1-145 (MTKRVLISVS…KNHASVTVVV (145 aa)) constitute an MGS-like domain.

It belongs to the PurH family.

The catalysed reaction is (6R)-10-formyltetrahydrofolate + 5-amino-1-(5-phospho-beta-D-ribosyl)imidazole-4-carboxamide = 5-formamido-1-(5-phospho-D-ribosyl)imidazole-4-carboxamide + (6S)-5,6,7,8-tetrahydrofolate. It carries out the reaction IMP + H2O = 5-formamido-1-(5-phospho-D-ribosyl)imidazole-4-carboxamide. Its pathway is purine metabolism; IMP biosynthesis via de novo pathway; 5-formamido-1-(5-phospho-D-ribosyl)imidazole-4-carboxamide from 5-amino-1-(5-phospho-D-ribosyl)imidazole-4-carboxamide (10-formyl THF route): step 1/1. It functions in the pathway purine metabolism; IMP biosynthesis via de novo pathway; IMP from 5-formamido-1-(5-phospho-D-ribosyl)imidazole-4-carboxamide: step 1/1. The chain is Bifunctional purine biosynthesis protein PurH from Streptococcus pneumoniae serotype 2 (strain D39 / NCTC 7466).